Consider the following 691-residue polypeptide: Elongation factor G (691 aa).

Residues 8–282 (ERVRNIGIAA…AVVDYLPAPI (275 aa)) enclose the tr-type G domain. GTP-binding positions include 17–24 (AHIDAGKT), 81–85 (DTPGH), and 135–138 (NKMD).

The protein belongs to the TRAFAC class translation factor GTPase superfamily. Classic translation factor GTPase family. EF-G/EF-2 subfamily.

It localises to the cytoplasm. Its function is as follows. Catalyzes the GTP-dependent ribosomal translocation step during translation elongation. During this step, the ribosome changes from the pre-translocational (PRE) to the post-translocational (POST) state as the newly formed A-site-bound peptidyl-tRNA and P-site-bound deacylated tRNA move to the P and E sites, respectively. Catalyzes the coordinated movement of the two tRNA molecules, the mRNA and conformational changes in the ribosome. The polypeptide is Elongation factor G (Synechococcus sp. (strain CC9902)).